Consider the following 98-residue polypeptide: Aspartyl/glutamyl-tRNA(Asn/Gln) amidotransferase subunit C (98 aa).

The interval 70–98 (PSLTPEQALSGAPAQEQQRFKVPQILGED) is disordered.

Belongs to the GatC family. In terms of assembly, heterotrimer of A, B and C subunits.

It carries out the reaction L-glutamyl-tRNA(Gln) + L-glutamine + ATP + H2O = L-glutaminyl-tRNA(Gln) + L-glutamate + ADP + phosphate + H(+). It catalyses the reaction L-aspartyl-tRNA(Asn) + L-glutamine + ATP + H2O = L-asparaginyl-tRNA(Asn) + L-glutamate + ADP + phosphate + 2 H(+). In terms of biological role, allows the formation of correctly charged Asn-tRNA(Asn) or Gln-tRNA(Gln) through the transamidation of misacylated Asp-tRNA(Asn) or Glu-tRNA(Gln) in organisms which lack either or both of asparaginyl-tRNA or glutaminyl-tRNA synthetases. The reaction takes place in the presence of glutamine and ATP through an activated phospho-Asp-tRNA(Asn) or phospho-Glu-tRNA(Gln). The sequence is that of Aspartyl/glutamyl-tRNA(Asn/Gln) amidotransferase subunit C from Streptomyces avermitilis (strain ATCC 31267 / DSM 46492 / JCM 5070 / NBRC 14893 / NCIMB 12804 / NRRL 8165 / MA-4680).